Consider the following 236-residue polypeptide: MTINALLLSSSRVGDTPYLSHALPFIKPLTANAQKWIFIPYAGVSMSYDTYLASVVAGLSELRLDISGIHQHPDPRQAIKDADGILIGGGNTFHLLHELYKYDLVHLIREEVQNGKPYIGWSAGSNVSGLSIRTTNDMPIIEPPSFTALNIVPFQLNPHYSNYRAPGHNGETRAQRLLEFTRVDPITPVVGIVEGSALWRQGDTLSLLGDNPAYLFCGEQQEIPIPVGSDLSHLLK.

Catalysis depends on charge relay system residues Ser122, Asp137, and His159.

It belongs to the peptidase S51 family.

Its subcellular location is the cytoplasm. The catalysed reaction is Dipeptidase E catalyzes the hydrolysis of dipeptides Asp-|-Xaa. It does not act on peptides with N-terminal Glu, Asn or Gln, nor does it cleave isoaspartyl peptides.. In terms of biological role, hydrolyzes dipeptides containing N-terminal aspartate residues. May play a role in allowing the cell to use peptide aspartate to spare carbon otherwise required for the synthesis of the aspartate family of amino acids. The polypeptide is Peptidase E (Shewanella sp. (strain ANA-3)).